Reading from the N-terminus, the 516-residue chain is 2,3-bisphosphoglycerate-independent phosphoglycerate mutase (516 aa).

Residues Asp-14 and Ser-64 each coordinate Mn(2+). Ser-64 acts as the Phosphoserine intermediate in catalysis. Substrate is bound by residues His-125, 155–156 (RD), Arg-187, Arg-193, 263–266 (RPDR), and Lys-337. Mn(2+) contacts are provided by Asp-404, His-408, Asp-445, His-446, and His-464.

The protein belongs to the BPG-independent phosphoglycerate mutase family. In terms of assembly, monomer. Mn(2+) is required as a cofactor.

It carries out the reaction (2R)-2-phosphoglycerate = (2R)-3-phosphoglycerate. It participates in carbohydrate degradation; glycolysis; pyruvate from D-glyceraldehyde 3-phosphate: step 3/5. Its function is as follows. Catalyzes the interconversion of 2-phosphoglycerate and 3-phosphoglycerate. The chain is 2,3-bisphosphoglycerate-independent phosphoglycerate mutase from Saccharophagus degradans (strain 2-40 / ATCC 43961 / DSM 17024).